The primary structure comprises 534 residues: Nuclear polyadenylated RNA-binding protein 4 (534 aa).

The interval 1 to 154 (MSSDEEDFND…TKEERSKADL (154 aa)) is disordered. Phosphoserine is present on residues Ser-2 and Ser-3. Basic and acidic residues predominate over residues 13-30 (GDDKPTTTEEVKKEEEQN). Residues 37–78 (SQLDQLAALQALSSSLNKLNNPNSNNSSSNNSNQDTSSSKQD) show a composition bias toward low complexity. A phosphoserine mark is found at Ser-51 and Ser-87. Basic and acidic residues predominate over residues 81–98 (ANDKEGSNEDTKNEKKQE). Low complexity-rich tracts occupy residues 99–112 (SATSANANANASSA) and 121–144 (QLQQTMSQFQQPSSQSPPQQQVTQ). Positions 145–154 (TKEERSKADL) are enriched in basic and acidic residues. 2 consecutive RRM domains span residues 159–241 (CKMF…EQDK) and 243–320 (GKIF…RAEP). A Phosphoserine modification is found at Ser-206. Disordered regions lie at residues 316 to 354 (KRAEPRHMQQKSSNNGGNNGGNNMNRRGGNFGNQGDFNQ) and 415 to 534 (MPPN…PYNR). Residues 336–354 (GNNMNRRGGNFGNQGDFNQ) are compositionally biased toward low complexity. Residues 420–459 (MTLNQPQQDSNATQGSPAPSDSDNNKSNDVQTIGNTSNTD) show a composition bias toward polar residues. Thr-458 carries the phosphothreonine modification. Residues Ser-460 and Ser-462 each carry the phosphoserine modification. Low complexity predominate over residues 460-475 (SGSPPLNLPNGPKGPS). A compositionally biased stretch (basic and acidic residues) spans 478–505 (NDDHNSGYGYNRDRGDRDRNDRDRDYNH). Arg-519 is modified (omega-N-methylarginine). Residues 523–534 (NRRNNGYHPYNR) show a composition bias toward low complexity.

Interacts with NAM7. Post-translationally, methylated by HMT1. The methylation is required for nuclear export.

It localises to the cytoplasm. Its subcellular location is the nucleus. The protein localises to the stress granule. Its function is as follows. RNA-binding protein, which is involved in the polyadenylation-dependent pre-mRNA 3'-end formation and cooperates with the cleavage factor CFIA complex and the cleavage and polyadenylation factor (CPF) complex. May be involved in regulation of poly(A) site selection. Is involved in nonsense-mediated mRNA decay. Seems to bind to an RNA downstream sequence element (DSE) located 3' of a nonsense codon and may mark the transcript for decay. This is Nuclear polyadenylated RNA-binding protein 4 from Saccharomyces cerevisiae (strain ATCC 204508 / S288c) (Baker's yeast).